A 376-amino-acid polypeptide reads, in one-letter code: MAINVNTNVSAMTAQRYLNGAADGMQKSMERLSSGYKINSARDDAAGLQISNRLTSQSRGLDMAVKNANDGISIAQTAEGAMNETTNILQRMRDLALQSSNGSNSSSERRAIQEEVSALNDELNRIAETTSFGGNKLLNGSFGSKSFQIGADSGEAVMLSMGSMRSDTQAMGGKSYRAQEGKAADWRVGAATDLTLSYTNKQGEAREVTINAKQGDDLEELATYINGQTEDVKASVGEDGKLQLFASSQKVNGDVTIGGGLGGEIGFDAGRNVTVADVNVSTVAGSQEAVSILDGALKAVDSQRASLGAFQNRFGHAISNLDNVNENVNASRSRIRDTDYARETTAMTKAQILQQASTSVLAQAKQSPSAALSLLG.

A coiled-coil region spans residues 103–129 (SNSSSERRAIQEEVSALNDELNRIAET).

Belongs to the bacterial flagellin family. Heteromer of multiple flagellin subunits including FlaA, FlaB, FlaC, FlaD and FlaE.

Its subcellular location is the secreted. The protein resides in the bacterial flagellum. In terms of biological role, flagellin is the subunit protein which polymerizes to form the filaments of bacterial flagella. FlaB is not essential for flagellar synthesis and motility. The protein is Flagellin B (flaB) of Vibrio cholerae serotype O1 (strain ATCC 39541 / Classical Ogawa 395 / O395).